Reading from the N-terminus, the 149-residue chain is Epoxide hydrolase EphG (149 aa).

Asp-93 functions as the Proton donor in the catalytic mechanism. Asp-122 functions as the Proton acceptor in the catalytic mechanism.

The protein belongs to the limonene-1,2-epoxide hydrolase family. In terms of assembly, homodimer. Is also present as monomer in solution.

The enzyme catalyses an epoxide + H2O = an ethanediol. The catalysed reaction is 5,6alpha-epoxy-5alpha-cholestan-3beta-ol + H2O = 5alpha-cholestane-3beta,5,6beta-triol. It catalyses the reaction 5,6beta-epoxy-5beta-cholestan-3beta-ol + H2O = 5alpha-cholestane-3beta,5,6beta-triol. With respect to regulation, is inhibited by the anti-epileptic drug valpromide (Ki value of about 100 uM). Functionally, epoxide hydrolase capable of hydrolyzing long or bulky lipophilic epoxides such as 9,10-epoxystearic acid and cholesterol 5,6-oxide in vitro. The physiological substrates have yet to be identified, but could be fatty acid or steroid derivatives. The polypeptide is Epoxide hydrolase EphG (ephG) (Mycobacterium tuberculosis (strain ATCC 25618 / H37Rv)).